The primary structure comprises 95 residues: Protein TusB (95 aa).

It belongs to the DsrH/TusB family. As to quaternary structure, heterohexamer, formed by a dimer of trimers. The hexameric TusBCD complex contains 2 copies each of TusB, TusC and TusD. The TusBCD complex interacts with TusE.

Its subcellular location is the cytoplasm. Functionally, part of a sulfur-relay system required for 2-thiolation of 5-methylaminomethyl-2-thiouridine (mnm(5)s(2)U) at tRNA wobble positions. The sequence is that of Protein TusB from Sodalis glossinidius (strain morsitans).